The following is a 249-amino-acid chain: Eukaryotic translation initiation factor 3 subunit K (249 aa).

One can recognise a PCI domain in the interval 46–222; it reads FDCYANLALL…VKVPTNKENE (177 aa).

The protein belongs to the eIF-3 subunit K family. As to quaternary structure, component of the eukaryotic translation initiation factor 3 (eIF-3) complex.

It is found in the cytoplasm. In terms of biological role, component of the eukaryotic translation initiation factor 3 (eIF-3) complex, which is involved in protein synthesis of a specialized repertoire of mRNAs and, together with other initiation factors, stimulates binding of mRNA and methionyl-tRNAi to the 40S ribosome. The eIF-3 complex specifically targets and initiates translation of a subset of mRNAs involved in cell proliferation. This is Eukaryotic translation initiation factor 3 subunit K from Aspergillus fumigatus (strain CBS 144.89 / FGSC A1163 / CEA10) (Neosartorya fumigata).